The primary structure comprises 81 residues: Kunitz-type serine protease inhibitor NACI (81 aa).

An N-terminal signal peptide occupies residues 1-24; that stretch reads MSSGGLLLLLGLLTLWAELTPVSG. The 51-residue stretch at 29-79 folds into the BPTI/Kunitz inhibitor domain; sequence CELAPSAGSCFAFVPSYYYNQYSNTCHSFTYSGCGGNANRFRTIDECNRTC. Intrachain disulfides connect cysteine 29–cysteine 79, cysteine 38–cysteine 62, and cysteine 54–cysteine 75. N-linked (GlcNAc...) asparagine glycosylation is present at asparagine 76.

As to expression, expressed by the venom gland.

It is found in the secreted. Functionally, serine protease inhibitor that inhibits chymotrypsin (Ki=25 nM). Also interacts with vasopressin V2 receptor (V2R/AVPR2). Inhibits vasopressin binding human V2R in the nanomolar range (Ki=112 nM), and also moderately inhibits vasopressin-induced cAMP production (IC(50)=138 nM). In vivo, intraperitoneal injection of this protein into rats increases diuresis by 2.2-fold, without any loss of electrolytes. This Naja atra (Chinese cobra) protein is Kunitz-type serine protease inhibitor NACI.